The sequence spans 444 residues: ATP-dependent 6-phosphofructokinase 2 (444 aa).

Phosphoserine is present on Ser55. ATP contacts are provided by residues Gly86, 149–150 (RG), and 174–177 (GDGT). Mg(2+) is bound at residue Asp175. Substrate-binding positions include 203–205 (TVD), 248–250 (MGR), Glu304, and 362–365 (YMIR). The active-site Proton acceptor is Asp205.

It belongs to the phosphofructokinase type A (PFKA) family. PPi-dependent PFK group II subfamily. Atypical ATP-dependent clade 'X' sub-subfamily. Homotetramer. Requires Mg(2+) as cofactor. Mostly expressed in roots and stems.

The protein resides in the cytoplasm. The enzyme catalyses beta-D-fructose 6-phosphate + ATP = beta-D-fructose 1,6-bisphosphate + ADP + H(+). Its pathway is carbohydrate degradation; glycolysis; D-glyceraldehyde 3-phosphate and glycerone phosphate from D-glucose: step 3/4. With respect to regulation, allosterically activated by AMP. Catalyzes the phosphorylation of D-fructose 6-phosphate to fructose 1,6-bisphosphate by ATP, the first committing step of glycolysis. The protein is ATP-dependent 6-phosphofructokinase 2 of Arabidopsis thaliana (Mouse-ear cress).